Reading from the N-terminus, the 204-residue chain is Protein G1-like5 (204 aa).

Disordered stretches follow at residues 1–45 (MEFV…ESQK) and 157–204 (RARG…GAAA). The span at 26–39 (TGATSASAAGASPS) shows a compositional bias: low complexity. The ALOG domain maps to 40-167 (RYESQKRRDW…ARGVSYEKKK (128 aa)). The Nuclear localization signal motif lies at 165–169 (KKKRK).

It belongs to the plant homeotic and developmental regulators ALOG protein family.

It localises to the nucleus. In terms of biological role, probable transcription regulator that acts as a developmental regulator by promoting cell growth in response to light. The chain is Protein G1-like5 (G1L5) from Oryza sativa subsp. japonica (Rice).